Consider the following 149-residue polypeptide: uncharacterized protein (149 aa).

This is an uncharacterized protein from Escherichia coli (strain K12).